The following is a 450-amino-acid chain: FERM domain-containing protein 8 (450 aa).

The region spanning 28 to 373 is the FERM domain; it reads MDVIVYLIND…YCIELSQTTE (346 aa).

Its subcellular location is the cytoplasm. It localises to the cytosol. It is found in the cell membrane. In terms of biological role, promotes the cell surface stability of RHBDF1 and RHBDF2 and prevents their degradation via the endolysosomal pathway. By acting on RHBDF proteins, involved in ADAM17-mediated ligand shedding. May negatively regulate Wnt signaling. In Xenopus tropicalis (Western clawed frog), this protein is FERM domain-containing protein 8 (frmd8).